Reading from the N-terminus, the 444-residue chain is Probable glycine dehydrogenase (decarboxylating) subunit 1 (444 aa).

It belongs to the GcvP family. N-terminal subunit subfamily. As to quaternary structure, the glycine cleavage system is composed of four proteins: P, T, L and H. In this organism, the P 'protein' is a heterodimer of two subunits.

The catalysed reaction is N(6)-[(R)-lipoyl]-L-lysyl-[glycine-cleavage complex H protein] + glycine + H(+) = N(6)-[(R)-S(8)-aminomethyldihydrolipoyl]-L-lysyl-[glycine-cleavage complex H protein] + CO2. In terms of biological role, the glycine cleavage system catalyzes the degradation of glycine. The P protein binds the alpha-amino group of glycine through its pyridoxal phosphate cofactor; CO(2) is released and the remaining methylamine moiety is then transferred to the lipoamide cofactor of the H protein. This Prosthecochloris aestuarii (strain DSM 271 / SK 413) protein is Probable glycine dehydrogenase (decarboxylating) subunit 1.